A 141-amino-acid chain; its full sequence is Large ribosomal subunit protein uL11 (141 aa).

Belongs to the universal ribosomal protein uL11 family. Part of the ribosomal stalk of the 50S ribosomal subunit. Interacts with L10 and the large rRNA to form the base of the stalk. L10 forms an elongated spine to which L12 dimers bind in a sequential fashion forming a multimeric L10(L12)X complex. Post-translationally, one or more lysine residues are methylated.

Forms part of the ribosomal stalk which helps the ribosome interact with GTP-bound translation factors. This Prochlorococcus marinus (strain SARG / CCMP1375 / SS120) protein is Large ribosomal subunit protein uL11.